We begin with the raw amino-acid sequence, 308 residues long: Protein translocase subunit SecF (308 aa).

Helical transmembrane passes span 28 to 48 (SIILSLISFIWIGIYKFNFGI), 140 to 160 (IEAGAMAMLFSFLAIMVYIWV), 164 to 184 (WYFGFGILIALVHDVILALGF), 194 to 214 (LSTIAAVLTIIGYSVNDSVVI), 246 to 266 (ILTVITTLLANLALILFGGEA), and 272 to 292 (ILVFFGIIVGTYSSIFISAPI).

This sequence belongs to the SecD/SecF family. SecF subfamily. In terms of assembly, forms a complex with SecD. Part of the essential Sec protein translocation apparatus which comprises SecA, SecYEG and auxiliary proteins SecDF-YajC and YidC.

The protein resides in the cell inner membrane. Part of the Sec protein translocase complex. Interacts with the SecYEG preprotein conducting channel. SecDF uses the proton motive force (PMF) to complete protein translocation after the ATP-dependent function of SecA. The protein is Protein translocase subunit SecF of Rickettsia rickettsii (strain Sheila Smith).